Reading from the N-terminus, the 259-residue chain is UPF0246 protein Rfer_2372 (259 aa).

Belongs to the UPF0246 family.

In Albidiferax ferrireducens (strain ATCC BAA-621 / DSM 15236 / T118) (Rhodoferax ferrireducens), this protein is UPF0246 protein Rfer_2372.